A 207-amino-acid polypeptide reads, in one-letter code: Large ribosomal subunit protein uL4 (207 aa).

A disordered region spans residues 50 to 75; sequence KTKTRSEVAGSGKKPFKQKGTGNARQ.

The protein belongs to the universal ribosomal protein uL4 family. In terms of assembly, part of the 50S ribosomal subunit.

Its function is as follows. One of the primary rRNA binding proteins, this protein initially binds near the 5'-end of the 23S rRNA. It is important during the early stages of 50S assembly. It makes multiple contacts with different domains of the 23S rRNA in the assembled 50S subunit and ribosome. In terms of biological role, forms part of the polypeptide exit tunnel. The protein is Large ribosomal subunit protein uL4 of Pelobacter propionicus (strain DSM 2379 / NBRC 103807 / OttBd1).